The following is a 198-amino-acid chain: Ribonuclease HII (198 aa).

The region spanning 10 to 198 (QLVAGVDEVG…PVKRALGLAS (189 aa)) is the RNase H type-2 domain. A divalent metal cation contacts are provided by Asp-16, Glu-17, and Asp-108.

The protein belongs to the RNase HII family. Mn(2+) serves as cofactor. Requires Mg(2+) as cofactor.

It localises to the cytoplasm. The enzyme catalyses Endonucleolytic cleavage to 5'-phosphomonoester.. In terms of biological role, endonuclease that specifically degrades the RNA of RNA-DNA hybrids. This is Ribonuclease HII from Escherichia coli O81 (strain ED1a).